The sequence spans 449 residues: Trigger factor (449 aa).

Residues 172 to 257 enclose the PPIase FKBP-type domain; that stretch reads GDEVRFDFKG…IKEITNVKPQ (86 aa).

The protein belongs to the FKBP-type PPIase family. Tig subfamily.

The protein resides in the cytoplasm. It catalyses the reaction [protein]-peptidylproline (omega=180) = [protein]-peptidylproline (omega=0). Its function is as follows. Involved in protein export. Acts as a chaperone by maintaining the newly synthesized protein in an open conformation. Functions as a peptidyl-prolyl cis-trans isomerase. The sequence is that of Trigger factor from Ureaplasma parvum serovar 3 (strain ATCC 27815 / 27 / NCTC 11736).